Reading from the N-terminus, the 146-residue chain is D-aminoacyl-tRNA deacylase (146 aa).

The Gly-cisPro motif, important for rejection of L-amino acids motif lies at 138–139 (GP).

This sequence belongs to the DTD family. Homodimer.

It is found in the cytoplasm. The catalysed reaction is glycyl-tRNA(Ala) + H2O = tRNA(Ala) + glycine + H(+). The enzyme catalyses a D-aminoacyl-tRNA + H2O = a tRNA + a D-alpha-amino acid + H(+). An aminoacyl-tRNA editing enzyme that deacylates mischarged D-aminoacyl-tRNAs. Also deacylates mischarged glycyl-tRNA(Ala), protecting cells against glycine mischarging by AlaRS. Acts via tRNA-based rather than protein-based catalysis; rejects L-amino acids rather than detecting D-amino acids in the active site. By recycling D-aminoacyl-tRNA to D-amino acids and free tRNA molecules, this enzyme counteracts the toxicity associated with the formation of D-aminoacyl-tRNA entities in vivo and helps enforce protein L-homochirality. This is D-aminoacyl-tRNA deacylase from Stenotrophomonas maltophilia (strain K279a).